The chain runs to 167 residues: Glucose-6-phosphate isomerase (167 aa).

The active-site Proton donor is E54. Residue H85 is part of the active site.

Belongs to the GPI family.

Its subcellular location is the cytoplasm. The catalysed reaction is alpha-D-glucose 6-phosphate = beta-D-fructose 6-phosphate. It functions in the pathway carbohydrate biosynthesis; gluconeogenesis. The protein operates within carbohydrate degradation; glycolysis; D-glyceraldehyde 3-phosphate and glycerone phosphate from D-glucose: step 2/4. Its function is as follows. Catalyzes the reversible isomerization of glucose-6-phosphate to fructose-6-phosphate. This is Glucose-6-phosphate isomerase from Klebsiella oxytoca.